Here is a 718-residue protein sequence, read N- to C-terminus: Probable trehalose-phosphatase (718 aa).

Residues 449 to 470 (LSMDQTGHKKVDAKKKPGIRKK) form a disordered region. The segment covering 459 to 470 (VDAKKKPGIRKK) has biased composition (basic residues).

This sequence in the N-terminal section; belongs to the glycosyltransferase 20 family. The protein in the C-terminal section; belongs to the trehalose phosphatase family.

It carries out the reaction alpha,alpha-trehalose 6-phosphate + H2O = alpha,alpha-trehalose + phosphate. The sequence is that of Probable trehalose-phosphatase from Encephalitozoon cuniculi (strain GB-M1) (Microsporidian parasite).